Consider the following 154-residue polypeptide: Lipoprotein signal peptidase (154 aa).

2 consecutive transmembrane segments (helical) span residues 55–75 and 84–104; these read GHMW…IYIM and LFSI…IDRV. Catalysis depends on residues D111 and D129. A helical membrane pass occupies residues 124-144; sequence IFNVADAALSVGVVLMLVYVF.

It belongs to the peptidase A8 family.

It is found in the cell membrane. The enzyme catalyses Release of signal peptides from bacterial membrane prolipoproteins. Hydrolyzes -Xaa-Yaa-Zaa-|-(S,diacylglyceryl)Cys-, in which Xaa is hydrophobic (preferably Leu), and Yaa (Ala or Ser) and Zaa (Gly or Ala) have small, neutral side chains.. Its pathway is protein modification; lipoprotein biosynthesis (signal peptide cleavage). This protein specifically catalyzes the removal of signal peptides from prolipoproteins. The polypeptide is Lipoprotein signal peptidase (Listeria monocytogenes serotype 4b (strain CLIP80459)).